The chain runs to 384 residues: Alanine racemase (384 aa).

Lysine 39 functions as the Proton acceptor; specific for D-alanine in the catalytic mechanism. N6-(pyridoxal phosphate)lysine is present on lysine 39. Position 138 (arginine 138) interacts with substrate. Tyrosine 265 serves as the catalytic Proton acceptor; specific for L-alanine. Methionine 312 serves as a coordination point for substrate.

Belongs to the alanine racemase family. The cofactor is pyridoxal 5'-phosphate.

The catalysed reaction is L-alanine = D-alanine. Its pathway is amino-acid biosynthesis; D-alanine biosynthesis; D-alanine from L-alanine: step 1/1. In terms of biological role, catalyzes the interconversion of L-alanine and D-alanine. May also act on other amino acids. The chain is Alanine racemase (alr) from Staphylococcus carnosus (strain TM300).